The primary structure comprises 216 residues: Probable GTP-binding protein EngB (216 aa).

One can recognise an EngB-type G domain in the interval 37-214 (AGLEVAFAGR…RAAMIKLIAE (178 aa)). GTP is bound by residues 45–52 (GRSNVGKS), 72–76 (GRTQE), 92–95 (DMPG), 159–162 (TKAD), and 193–195 (TSS). Residues serine 52 and threonine 74 each contribute to the Mg(2+) site.

This sequence belongs to the TRAFAC class TrmE-Era-EngA-EngB-Septin-like GTPase superfamily. EngB GTPase family. Mg(2+) serves as cofactor.

Functionally, necessary for normal cell division and for the maintenance of normal septation. The sequence is that of Probable GTP-binding protein EngB from Rhodopseudomonas palustris (strain BisB18).